Consider the following 234-residue polypeptide: Leucyl/phenylalanyl-tRNA--protein transferase (234 aa).

The protein belongs to the L/F-transferase family.

It localises to the cytoplasm. It catalyses the reaction N-terminal L-lysyl-[protein] + L-leucyl-tRNA(Leu) = N-terminal L-leucyl-L-lysyl-[protein] + tRNA(Leu) + H(+). The enzyme catalyses N-terminal L-arginyl-[protein] + L-leucyl-tRNA(Leu) = N-terminal L-leucyl-L-arginyl-[protein] + tRNA(Leu) + H(+). The catalysed reaction is L-phenylalanyl-tRNA(Phe) + an N-terminal L-alpha-aminoacyl-[protein] = an N-terminal L-phenylalanyl-L-alpha-aminoacyl-[protein] + tRNA(Phe). Functions in the N-end rule pathway of protein degradation where it conjugates Leu, Phe and, less efficiently, Met from aminoacyl-tRNAs to the N-termini of proteins containing an N-terminal arginine or lysine. The polypeptide is Leucyl/phenylalanyl-tRNA--protein transferase (Salmonella agona (strain SL483)).